The primary structure comprises 265 residues: Indole-3-glycerol phosphate synthase (265 aa).

The protein belongs to the TrpC family.

The enzyme catalyses 1-(2-carboxyphenylamino)-1-deoxy-D-ribulose 5-phosphate + H(+) = (1S,2R)-1-C-(indol-3-yl)glycerol 3-phosphate + CO2 + H2O. Its pathway is amino-acid biosynthesis; L-tryptophan biosynthesis; L-tryptophan from chorismate: step 4/5. The protein is Indole-3-glycerol phosphate synthase of Chromobacterium violaceum (strain ATCC 12472 / DSM 30191 / JCM 1249 / CCUG 213 / NBRC 12614 / NCIMB 9131 / NCTC 9757 / MK).